We begin with the raw amino-acid sequence, 467 residues long: Multiple inositol polyphosphate phosphatase 1 (467 aa).

An N-terminal signal peptide occupies residues 1 to 15 (MRLLILLLLPLVAIA). Histidine 67 is an active-site residue. Asparagine 120, asparagine 159, and asparagine 234 each carry an N-linked (GlcNAc...) asparagine glycan. Residue glycine 441 is the site of GPI-anchor amidated glycine attachment. Positions 442 to 467 (GAPSLGSGVGGLLATTLAAMLVYLMH) are cleaved as a propeptide — removed in mature form.

This sequence belongs to the histidine acid phosphatase family. MINPP1 subfamily. N-glycosylated.

It is found in the cell membrane. It localises to the apical cell membrane. Its subcellular location is the basolateral cell membrane. The protein localises to the cell projection. The protein resides in the filopodium. It is found in the cell junction. The catalysed reaction is (2R)-2,3-bisphosphoglycerate + H2O = (2R)-2-phosphoglycerate + phosphate. The enzyme catalyses 1D-myo-inositol hexakisphosphate + H2O = 1D-myo-inositol 1,2,4,5,6-pentakisphosphate + phosphate. It catalyses the reaction 1D-myo-inositol 1,2,4,5,6-pentakisphosphate + H2O = 1D-myo-inositol 1,2,5,6-tetrakisphosphate + phosphate. It carries out the reaction 1D-myo-inositol 1,2,5,6-tetrakisphosphate + H2O = 1D-myo-inositol 1,2,6-trisphosphate + phosphate. Functionally, probable multiple inositol polyphosphate phosphatase that hydrolyzes 1D-myo-inositol 1,3,4,5,6-pentakisphosphate (InsP5[2OH]) and 1D-myo-inositol hexakisphosphate (InsP6) to a range of less phosphorylated inositol phosphates. This regulates the availability of these various small molecule second messengers and metal chelators which control many aspects of cell physiology. May have a dual substrate specificity, and function as a 2,3-bisphosphoglycerate 3-phosphatase hydrolyzing 2,3-bisphosphoglycerate to 2-phosphoglycerate. 2,3-bisphosphoglycerate (BPG) is formed as part of the Rapoport-Luebering glycolytic bypass. Has a role in embryonic tracheal development where it localizes to the leading edge of actively migrating branches. In these leading cells, enhances formation and/or maintenance of filopodia which may drive branch migration and elongation by cell-cell intercalation. The function in tracheal morphogenesis is dependent on its inositol polyphosphate phosphatase activity. In Drosophila melanogaster (Fruit fly), this protein is Multiple inositol polyphosphate phosphatase 1.